A 582-amino-acid chain; its full sequence is 2-succinyl-5-enolpyruvyl-6-hydroxy-3-cyclohexene-1-carboxylate synthase (582 aa).

The protein belongs to the TPP enzyme family. MenD subfamily. Homodimer. Mg(2+) is required as a cofactor. Mn(2+) serves as cofactor. Requires thiamine diphosphate as cofactor.

The enzyme catalyses isochorismate + 2-oxoglutarate + H(+) = 5-enolpyruvoyl-6-hydroxy-2-succinyl-cyclohex-3-ene-1-carboxylate + CO2. Its pathway is quinol/quinone metabolism; 1,4-dihydroxy-2-naphthoate biosynthesis; 1,4-dihydroxy-2-naphthoate from chorismate: step 2/7. The protein operates within cofactor biosynthesis; phylloquinone biosynthesis. Functionally, catalyzes the thiamine diphosphate-dependent decarboxylation of 2-oxoglutarate and the subsequent addition of the resulting succinic semialdehyde-thiamine pyrophosphate anion to isochorismate to yield 2-succinyl-5-enolpyruvyl-6-hydroxy-3-cyclohexene-1-carboxylate (SEPHCHC). The sequence is that of 2-succinyl-5-enolpyruvyl-6-hydroxy-3-cyclohexene-1-carboxylate synthase from Prochlorococcus marinus (strain MIT 9303).